We begin with the raw amino-acid sequence, 1237 residues long: Anion exchange protein 2 (1237 aa).

The segment at 1–238 (MSSAPRRPAS…YNLQERRRIG (238 aa)) is disordered. Over 1-703 (MSSAPRRPAS…SDFRDALDPQ (703 aa)) the chain is Cytoplasmic. Basic and acidic residues-rich tracts occupy residues 38 to 48 (LRTLGVERFEE) and 57 to 74 (GGEE…EYHR). Composition is skewed to basic residues over residues 75–84 (QSSHHIHHPL) and 93–109 (RRRK…RRRP). Ser-112, Ser-131, Ser-144, Ser-170, Ser-172, and Ser-239 each carry phosphoserine. The segment covering 119–132 (TIEEGEEDEEEASE) has biased composition (acidic residues). The residue at position 253 (Thr-253) is a Phosphothreonine. N6-methyllysine is present on Lys-270. Positions 285–316 (VRKNAKGSTQAAREGREPGPTPRARPRAPHKP) are disordered. Ser-439 carries the phosphoserine modification. Positions 445-466 (SLLGHHHAQGTESDPHVTEPLI) are disordered. 4 helical membrane passes run 704–727 (CLAA…GLLG), 733–770 (LIGV…LLVF), 790–812 (VWIG…SFLV), and 822–843 (IFAF…IKIF). The tract at residues 704 to 1237 (CLAAVIFIYF…DEYNEMPMPV (534 aa)) is membrane (anion exchange). Residues 844 to 896 (QEHPLHGCSGSNDSEAGSSSSSNMTWATTILVPDNSSASGQSGQEKPRGQPNT) are Extracellular-facing. Asn-855, Asn-866, and Asn-878 each carry an N-linked (GlcNAc...) asparagine glycan. The helical transmembrane segment at 897 to 914 (ALLSLVLMAGTFFIAFFL) threads the bilayer. Over 915–929 (RKFKNSRFFPGRIRR) the chain is Cytoplasmic. A run of 5 helical transmembrane segments spans residues 930 to 950 (VIGD…DYSI), 984 to 1006 (PFPV…LIFM), 1032 to 1053 (LLLI…LAAA), 1087 to 1132 (VTGL…IQFY), and 1159 to 1195 (MHLF…TVPL). Cys-1169 carries S-palmitoyl cysteine lipidation.

It belongs to the anion exchanger (TC 2.A.31) family. As to expression, expressed in the choroid plexus epithelium (at protein level). Expressed in the parotid gland and sublingual salivary gland acinar cells (at protein level). In terms of tissue distribution, widely expressed at similar levels in all tissues examined. Expressed in the testis. Predominantly expressed in stomach although they are also detected at lower levels in other tissues. Expressed in the testis. As to expression, stomach-specific. In terms of tissue distribution, expressed at slightly higher levels in lung and stomach than in other tissues.

It is found in the apical cell membrane. It localises to the basolateral cell membrane. The catalysed reaction is hydrogencarbonate(in) + chloride(out) = hydrogencarbonate(out) + chloride(in). With respect to regulation, inhibited by 4,4'-diisothiocyanatostilbene-2,2'-disulfonic acid (DIDS) and acetazolamide. Muscarinic receptor stimulation enhances activity through a Ca(2+)-dependent mechanism. Its function is as follows. Sodium-independent anion exchanger which mediates the electroneutral exchange of chloride for bicarbonate ions across the cell membrane. Plays an important role in osteoclast differentiation and function. Regulates bone resorption and calpain-dependent actin cytoskeleton organization in osteoclasts via anion exchange-dependent control of pH. Essential for intracellular pH regulation in CD8(+) T-cells upon CD3 stimulation, modulating CD8(+) T-cell responses. Functionally, plays a critical role in male fertility and spermiogenesis. This is Anion exchange protein 2 (Slc4a2) from Mus musculus (Mouse).